The sequence spans 586 residues: MLACVTMKMLRHAKCFQRLAIFGSVRALHKDNRTATPQNFSNYESMKQDFKLGIPEYFNFAKDVLDQWTDKEKAGKKPSNPAFWWINRNGEEVRWSFEELGSLSRKFANILSEACSLQRGDRVILILPRVPEWWLANVACLRTGTVLIPGTTQLTQKDILYRLQSSKANCIITNDVLAPAVDAVAPKCENLHSKLIVSENSREGWGNLKEMMKHASDSHTCVKTKHNEIMAIFFTSGTSGYPKMTAHTHSSFGLGLSVNGRFWLDLTPSDVMWNTSDTGWAKSAWSSVFSPWIQGACVFTHHLPRFEPTSILQTLSKYPITVFCSAPTVYRMLVQNDMASYKFKSLKHCVSAGEPITPDVTEKWRNKTGLDIYEGYGQTETVLICGNFKGMKIKPGSMGKPSPAFDVKIVDVNGNVLPPGQEGDIGIQVLPNRPFGLFTHYVDNPSKTASTLRGNFYITGDRGYMDEDGYFWFVARADDVILSSGYRIGPFEVENALNEHPSVAESAVVSSPDPIRGEVVKAFVVLNPDYKSHDQEQLIKEIQEHVKKTTAPYKYPRKVEFIQELPKTISGKTKRNELRKKEWKTI.

A mitochondrion-targeting transit peptide spans 1–27 (MLACVTMKMLRHAKCFQRLAIFGSVRA). N6-succinyllysine is present on residues K73 and K106. The residue at position 157 (K157) is an N6-acetyllysine. Residues 235–243 (TSGTSGYPK), 374–379 (EGYGQT), D461, R476, and K572 each bind ATP.

This sequence belongs to the ATP-dependent AMP-binding enzyme family. Mg(2+) is required as a cofactor. The cofactor is Mn(2+).

The protein resides in the mitochondrion. Its subcellular location is the mitochondrion matrix. The catalysed reaction is a medium-chain fatty acid + ATP + CoA = a medium-chain fatty acyl-CoA + AMP + diphosphate. It carries out the reaction propanoate + ATP + CoA = propanoyl-CoA + AMP + diphosphate. It catalyses the reaction butanoate + ATP + CoA = butanoyl-CoA + AMP + diphosphate. The enzyme catalyses 2-methylpropanoate + ATP + CoA = 2-methylpropanoyl-CoA + AMP + diphosphate. The catalysed reaction is 2-methylbutanoate + ATP + CoA = 2-methylbutanoyl-CoA + AMP + diphosphate. It carries out the reaction octanoate + ATP + CoA = octanoyl-CoA + AMP + diphosphate. Functionally, catalyzes the activation of fatty acids by CoA to produce an acyl-CoA, the first step in fatty acid metabolism. Capable of activating medium-chain fatty acids with a preference for isobutyrate among fatty acids with 2-6 carbon atoms. This Pongo abelii (Sumatran orangutan) protein is Acyl-coenzyme A synthetase ACSM3, mitochondrial (ACSM3).